The following is a 583-amino-acid chain: Proline--tRNA ligase (583 aa).

The protein belongs to the class-II aminoacyl-tRNA synthetase family. ProS type 1 subfamily. Homodimer.

The protein localises to the cytoplasm. The enzyme catalyses tRNA(Pro) + L-proline + ATP = L-prolyl-tRNA(Pro) + AMP + diphosphate. Catalyzes the attachment of proline to tRNA(Pro) in a two-step reaction: proline is first activated by ATP to form Pro-AMP and then transferred to the acceptor end of tRNA(Pro). As ProRS can inadvertently accommodate and process non-cognate amino acids such as alanine and cysteine, to avoid such errors it has two additional distinct editing activities against alanine. One activity is designated as 'pretransfer' editing and involves the tRNA(Pro)-independent hydrolysis of activated Ala-AMP. The other activity is designated 'posttransfer' editing and involves deacylation of mischarged Ala-tRNA(Pro). The misacylated Cys-tRNA(Pro) is not edited by ProRS. This chain is Proline--tRNA ligase, found in Methylococcus capsulatus (strain ATCC 33009 / NCIMB 11132 / Bath).